The chain runs to 187 residues: MLPDKGWLVEARRVPSPHYDCRPDDEKPSLLVVHNISLPPGEFGGPWIDALFTGTIDPDAHPFFAEIAHLRVSAHCLIRRDGEIVQYVPFDKRAWHAGVSNYQGRERCNDFSIGIELEGTDTLAYTDAQYQQLAAVTRTLIASYPAIADNMTGHCNITPDRKTDPGPAFDWPRFRALVALSSHKEMT.

One can recognise an N-acetylmuramoyl-L-alanine amidase domain in the interval 29–167; the sequence is SLLVVHNISL…TPDRKTDPGP (139 aa). H34 serves as a coordination point for Zn(2+). The Proton acceptor role is filled by E116. Zn(2+) is bound by residues H154 and D164.

Belongs to the N-acetylmuramoyl-L-alanine amidase 2 family. Zn(2+) serves as cofactor.

It localises to the cytoplasm. The catalysed reaction is Hydrolyzes the link between N-acetylmuramoyl residues and L-amino acid residues in certain cell-wall glycopeptides.. Functionally, involved in cell wall peptidoglycan recycling. Specifically cleaves the amide bond between the lactyl group of N-acetylmuramic acid and the alpha-amino group of the L-alanine in degradation products containing an anhydro N-acetylmuramyl moiety. The polypeptide is 1,6-anhydro-N-acetylmuramyl-L-alanine amidase AmpD (ampD) (Salmonella typhimurium (strain LT2 / SGSC1412 / ATCC 700720)).